A 1650-amino-acid polypeptide reads, in one-letter code: Transmembrane domain-containing protein DDB_G0287209 (1650 aa).

Residues asparagine 194–isoleucine 225 are a coiled coil. Disordered regions lie at residues asparagine 197–asparagine 216 and glutamate 1218–asparagine 1296. Residues asparagine 1224–glycine 1284 are compositionally biased toward low complexity. Helical transmembrane passes span proline 1314–phenylalanine 1334, isoleucine 1347–phenylalanine 1369, isoleucine 1390–serine 1410, tryptophan 1454–proline 1474, isoleucine 1489–phenylalanine 1509, tryptophan 1515–leucine 1535, proline 1539–phenylalanine 1559, valine 1570–isoleucine 1590, and phenylalanine 1595–isoleucine 1615.

The protein resides in the membrane. This chain is Transmembrane domain-containing protein DDB_G0287209, found in Dictyostelium discoideum (Social amoeba).